A 442-amino-acid chain; its full sequence is ATP-dependent protease ATPase subunit HslU (442 aa).

ATP is bound by residues Ile18 and 60 to 65 (GVGKTE). Residues 133 to 156 (DALLPKPKNDWDNTDSDTSSNTRQ) form a disordered region. The ATP site is built by Asp255, Glu320, and Arg392.

It belongs to the ClpX chaperone family. HslU subfamily. A double ring-shaped homohexamer of HslV is capped on each side by a ring-shaped HslU homohexamer. The assembly of the HslU/HslV complex is dependent on binding of ATP.

It is found in the cytoplasm. Its function is as follows. ATPase subunit of a proteasome-like degradation complex; this subunit has chaperone activity. The binding of ATP and its subsequent hydrolysis by HslU are essential for unfolding of protein substrates subsequently hydrolyzed by HslV. HslU recognizes the N-terminal part of its protein substrates and unfolds these before they are guided to HslV for hydrolysis. This chain is ATP-dependent protease ATPase subunit HslU, found in Shewanella sp. (strain ANA-3).